Reading from the N-terminus, the 391-residue chain is Elongation factor Tu (391 aa).

The 192-residue stretch at 10–201 folds into the tr-type G domain; it reads KPHVNIGTIG…AVDEYIPTPA (192 aa). The G1 stretch occupies residues 19–26; sequence GHVDHGKT. 19 to 26 serves as a coordination point for GTP; that stretch reads GHVDHGKT. Thr-26 provides a ligand contact to Mg(2+). The interval 55 to 59 is G2; sequence GITIS. Positions 76–79 are G3; it reads DCPG. Residues 76–80 and 131–134 contribute to the GTP site; these read DCPGH and NKVD. Positions 131–134 are G4; it reads NKVD. The interval 169-171 is G5; that stretch reads SAL.

The protein belongs to the TRAFAC class translation factor GTPase superfamily. Classic translation factor GTPase family. EF-Tu/EF-1A subfamily. Monomer.

It is found in the cytoplasm. It carries out the reaction GTP + H2O = GDP + phosphate + H(+). Functionally, GTP hydrolase that promotes the GTP-dependent binding of aminoacyl-tRNA to the A-site of ribosomes during protein biosynthesis. The chain is Elongation factor Tu from Ruegeria pomeroyi (strain ATCC 700808 / DSM 15171 / DSS-3) (Silicibacter pomeroyi).